Here is a 172-residue protein sequence, read N- to C-terminus: Keratin, high-sulfur matrix protein, B2A (172 aa).

Ala-2 carries the post-translational modification N-acetylalanine. 5 consecutive repeats follow at residues 27-36 (PTCCQTSCCQ), 37-46 (PTSIQTSCCQ), 47-56 (PISIQTSCCQ), 57-66 (PTSIQTSCCQ), and 67-76 (PTCLQTSGCE).

In terms of biological role, the keratin products of mammalian epidermal derivatives such as wool and hair consist of microfibrils embedded in a rigid matrix of other proteins. The matrix proteins include the high-sulfur and high-tyrosine keratins, having molecular weights of 6-20 kDa, whereas the microfibrils contain the larger, low-sulfur keratins (40-56 kDa). The polypeptide is Keratin, high-sulfur matrix protein, B2A (Ovis aries (Sheep)).